The following is a 310-amino-acid chain: tRNA dimethylallyltransferase 2 (310 aa).

G15–T22 lines the ATP pocket. T17–T22 lines the substrate pocket. Residues D40–Q43 form an interaction with substrate tRNA region.

It belongs to the IPP transferase family. As to quaternary structure, monomer. It depends on Mg(2+) as a cofactor.

The catalysed reaction is adenosine(37) in tRNA + dimethylallyl diphosphate = N(6)-dimethylallyladenosine(37) in tRNA + diphosphate. Its function is as follows. Catalyzes the transfer of a dimethylallyl group onto the adenine at position 37 in tRNAs that read codons beginning with uridine, leading to the formation of N6-(dimethylallyl)adenosine (i(6)A). This chain is tRNA dimethylallyltransferase 2, found in Geotalea uraniireducens (strain Rf4) (Geobacter uraniireducens).